The sequence spans 976 residues: Vacuolar membrane protease (976 aa).

The Cytoplasmic segment spans residues 1–51 (MPLSTGLTLSSLNVMEKADNHYNMMTKQPPALSPVDMVSSRRGFNPIAFTP). A helical membrane pass occupies residues 52–72 (WPVTILSSLVYLAFIIPIIVV). Topologically, residues 73–399 (HHLVPPAPKE…DNGNDGKLNN (327 aa)) are vacuolar. N-linked (GlcNAc...) asparagine glycosylation is found at N147 and N150. Zn(2+)-binding residues include H206 and D218. Catalysis depends on E252, which acts as the Proton acceptor. The Zn(2+) site is built by E253, E278, and H351. The chain crosses the membrane as a helical span at residues 400–420 (GAGTLGVWFDFYGSSFAVFEL). Residues 421–427 (NTLFGHS) are Cytoplasmic-facing. A helical membrane pass occupies residues 428–448 (VALLVVAPLLLIATCVTLYTL). The Vacuolar portion of the chain corresponds to 449-477 (DKMYMFSMYTYLSESGGQVSLYGLRGLFR). A helical membrane pass occupies residues 478-498 (FPLILGISTALTIGLAFLLMK). Residues 499–519 (ANPFIIYSSPYAVWNPSALHR) are Cytoplasmic-facing. Residues 520 to 540 (AYAFTWMFGMMWVLLVIATVY) traverse the membrane as a helical segment. Topologically, residues 541-550 (QKQHGIASSY) are vacuolar. Residues 551-571 (FIVFYFAGVSIATWISYLELF) traverse the membrane as a helical segment. The Cytoplasmic segment spans residues 572–675 (GLPTTQDYAR…HRLEQRWSIN (104 aa)). A disordered region spans residues 590–633 (TPSSDSRLLAPSADELPPSGSAAGHDFNPEDVEDEEPTESTSLL). Positions 618-627 (PEDVEDEEPT) are enriched in acidic residues. A helical transmembrane segment spans residues 676-696 (LISSAWILQFLFVAPIVIILL). The Vacuolar segment spans residues 697–718 (GQLGLFLTSATYQIGADGGSQL). The helical transmembrane segment at 719–739 (VIYVGIAVLSVLILLPLFPFI) threads the bilayer. The Cytoplasmic segment spans residues 740 to 745 (HRFTYH). A helical membrane pass occupies residues 746–766 (IPTFLLFVLIGTLVYNLTAFP). Topologically, residues 767–976 (FSHSNRLKVA…LVEGSHSFKL (210 aa)) are vacuolar. N848 carries an N-linked (GlcNAc...) asparagine glycan.

The protein belongs to the peptidase M28 family. Zn(2+) is required as a cofactor.

The protein localises to the vacuole membrane. Its function is as follows. May be involved in vacuolar sorting and osmoregulation. The chain is Vacuolar membrane protease from Arthroderma otae (strain ATCC MYA-4605 / CBS 113480) (Microsporum canis).